The chain runs to 142 residues: Hemoglobin subunit alpha-3 (142 aa).

In terms of domain architecture, Globin spans V2 to R142. H59 provides a ligand contact to O2. Residue H88 participates in heme b binding.

Belongs to the globin family. In terms of assembly, heterotetramer of two alpha chains and two beta chains. As to expression, red blood cells.

In terms of biological role, involved in oxygen transport from the lung to the various peripheral tissues. The sequence is that of Hemoglobin subunit alpha-3 from Bubalus bubalis (Domestic water buffalo).